The sequence spans 416 residues: Homeobox even-skipped homolog protein 1 (416 aa).

2 disordered regions span residues 30-120 (AVSS…SDFY) and 138-178 (YQHS…LACS). The span at 72–82 (GLAGSAAGLGA) shows a compositional bias: low complexity. Residues 102–114 (DSLSGQGQPSSSD) are compositionally biased toward polar residues. A DNA-binding region (homeobox) is located at residues 183 to 242 (MRRYRTAFTREQIARLEKEFYRENYVSRPRRCELAAALNLPETTIKVWFQNRRMKDKRQR).

This sequence belongs to the even-skipped homeobox family.

It is found in the nucleus. May play a role in the specification of neuronal cell types. May play a role in the dorsoventral specification of mesodermal cell fate. The polypeptide is Homeobox even-skipped homolog protein 1 (Evx1) (Mus musculus (Mouse)).